A 791-amino-acid chain; its full sequence is Major facilitator superfamily domain-containing protein 6 (791 aa).

Ala-2 carries the post-translational modification N-acetylalanine. Thr-10 is subject to Phosphothreonine. The tract at residues 22-47 (LADPFNGISREPEPPSNETPSSTETS) is disordered. Positions 37 to 47 (SNETPSSTETS) are enriched in low complexity. 6 helical membrane passes run 73-93 (VFYF…PVYY), 105-125 (LLVG…GVVA), 132-152 (KIVL…IGFV), 286-306 (AIFL…ASSV), 335-355 (WGLA…EVLI), and 369-389 (QIVF…ATQF). Residues 407-427 (EIPQVERNNSTESSEETPTTT) form a disordered region. The span at 416–427 (STESSEETPTTT) shows a compositional bias: low complexity. 6 helical membrane-spanning segments follow: residues 450–470 (VLFV…FLYW), 479–499 (TTLF…AYFF), 507–527 (IGHI…YIYI), 544–564 (GVTH…AVPP), 579–599 (LGLG…YFGA), and 605–625 (GIGM…WLAV). Disordered stretches follow at residues 662-687 (MPRI…NKPA) and 723-791 (LQGT…AGGH). Over residues 750–768 (SRNQPSPDAAASQTQTSPA) the composition is skewed to polar residues. A compositionally biased stretch (low complexity) spans 782–791 (QQAQLAAGGH).

This sequence belongs to the major facilitator superfamily. MFSD6 family. As to quaternary structure, may interact with HLA-B62. In terms of tissue distribution, widely expressed. Expression levels in peripheral blood mononuclear cells are highly variable between individuals, including no expression at all.

The protein resides in the membrane. This chain is Major facilitator superfamily domain-containing protein 6 (MFSD6), found in Homo sapiens (Human).